Consider the following 543-residue polypeptide: UPF0324 membrane protein RB9488 (543 aa).

The segment covering 1–22 has biased composition (low complexity); sequence MNSNTPSSDNSSPDNVSPDTSD. Positions 1-41 are disordered; that stretch reads MNSNTPSSDNSSPDNVSPDTSDMASAGDDSALATPPPRPSL. The helical transmembrane segment at 51–73 threads the bilayer; that stretch reads WWAIWCAALLLLIAFAAVWIGQP. Positions 91-120 are disordered; it reads VETAPENAGPSAEAENEAIETENTAPAENA. A run of 11 helical transmembrane segments spans residues 160–182, 189–211, 221–243, 270–292, 307–329, 336–358, 368–390, 403–422, 437–459, 479–496, and 511–533; these read ISSS…AFAN, AGAF…WMSG, EYAL…PDFL, LALG…ITTY, NMVI…AAAC, LSLS…PAVI, GGAW…AVLG, IQNI…WVTF, IWYR…SILY, TLRG…GLET, and LVLY…YLMF.

It belongs to the UPF0324 family.

It localises to the cell membrane. This chain is UPF0324 membrane protein RB9488, found in Rhodopirellula baltica (strain DSM 10527 / NCIMB 13988 / SH1).